Here is a 119-residue protein sequence, read N- to C-terminus: Holo-[acyl-carrier-protein] synthase (119 aa).

The Mg(2+) site is built by Asp-8 and Glu-58.

The protein belongs to the P-Pant transferase superfamily. AcpS family. Mg(2+) is required as a cofactor.

The protein localises to the cytoplasm. It catalyses the reaction apo-[ACP] + CoA = holo-[ACP] + adenosine 3',5'-bisphosphate + H(+). In terms of biological role, transfers the 4'-phosphopantetheine moiety from coenzyme A to a Ser of acyl-carrier-protein. The sequence is that of Holo-[acyl-carrier-protein] synthase from Geobacillus sp. (strain WCH70).